The primary structure comprises 232 residues: Ribose-5-phosphate isomerase A (232 aa).

Substrate-binding positions include 29–32 (SGST), 86–89 (DGAD), and 99–102 (KGGG). Catalysis depends on E108, which acts as the Proton acceptor. K126 is a substrate binding site.

Belongs to the ribose 5-phosphate isomerase family. In terms of assembly, homodimer.

It catalyses the reaction aldehydo-D-ribose 5-phosphate = D-ribulose 5-phosphate. It functions in the pathway carbohydrate degradation; pentose phosphate pathway; D-ribose 5-phosphate from D-ribulose 5-phosphate (non-oxidative stage): step 1/1. In terms of biological role, catalyzes the reversible conversion of ribose-5-phosphate to ribulose 5-phosphate. This is Ribose-5-phosphate isomerase A from Synechococcus sp. (strain ATCC 27144 / PCC 6301 / SAUG 1402/1) (Anacystis nidulans).